Consider the following 159-residue polypeptide: Growth arrest and DNA damage-inducible protein GADD45 gamma (159 aa).

The homodimerization stretch occupies residues 43–86 (VYESAKVLNVDPDNVTFCVLAAGEEDEGDIALQIHFTLIQAFCC).

Belongs to the GADD45 family. In terms of assembly, undergoes concentration-dependent homodimerization, which is required for growth inhibititory activity and enhances interaction with PCNA. Interacts with GADD45GIP1. Interacts with PCNA.

Its function is as follows. Involved in the regulation of growth and apoptosis. Mediates activation of stress-responsive MTK1/MEKK4 MAPKKK. In Homo sapiens (Human), this protein is Growth arrest and DNA damage-inducible protein GADD45 gamma (GADD45G).